A 708-amino-acid polypeptide reads, in one-letter code: Ubiquitin thioesterase Zranb1 (708 aa).

A RanBP2-type 1 zinc finger spans residues 3–33; that stretch reads EHGIKWACEYCTYENWPSAIKCTMCRAQRPS. Residues Cys-10, Cys-13, Cys-24, and Cys-27 each coordinate Zn(2+). The segment at 38–73 is disordered; sequence TEDPFKSGSSDVGRDWDPSSTEGGSSPLICPDSSAR. 2 RanBP2-type zinc fingers span residues 84 to 113 and 149 to 178; these read NANK…QRRT and RTQH…PRPN. Residues Cys-90, Cys-93, Cys-104, Cys-107, Cys-155, Cys-158, Cys-169, and Cys-172 each contribute to the Zn(2+) site. Positions 202–224 are disordered; that stretch reads RWRGGCSSGNSQRRSPPTTKRDS. A compositionally biased stretch (polar residues) spans 209 to 219; it reads SGNSQRRSPPT. ANK repeat units lie at residues 260-290 and 313-340; these read KKTD…SGGD and YTLV…QQAA. An OTU domain is found at 432–592; the sequence is LYALWNRTAG…RGHFSALVAM (161 aa). Residue Cys-443 is the Nucleophile of the active site. The active-site Proton acceptor is His-585.

Belongs to the peptidase C64 family. Interacts with TRAF6. Interacts with APC.

The protein resides in the cytoplasm. It localises to the nucleus. The catalysed reaction is Thiol-dependent hydrolysis of ester, thioester, amide, peptide and isopeptide bonds formed by the C-terminal Gly of ubiquitin (a 76-residue protein attached to proteins as an intracellular targeting signal).. Functionally, ubiquitin thioesterase, which specifically hydrolyzes 'Lys-29'-linked and 'Lys-33'-linked diubiquitin. Also cleaves 'Lys-63'-linked chains, but with 40-fold less efficiency compared to 'Lys-29'-linked ones. Positive regulator of the Wnt signaling pathway that deubiquitinates APC protein, a negative regulator of Wnt-mediated transcription. Acts as a regulator of autophagy by mediating deubiquitination of PIK3C3/VPS34, thereby promoting autophagosome maturation. Plays a role in the regulation of cell morphology and cytoskeletal organization. Required in the stress fiber dynamics and cell migration. The chain is Ubiquitin thioesterase Zranb1 from Mus musculus (Mouse).